Here is a 468-residue protein sequence, read N- to C-terminus: Plant UBX domain-containing protein 7 (468 aa).

N-acetylmethionine is present on Met-1. The UBA-like domain occupies Ser-7–Tyr-48. 2 disordered regions span residues Lys-138–Arg-168 and His-299–Glu-329. Residues Ser-150–Ala-166 are compositionally biased toward low complexity. One can recognise a UIM domain in the interval Glu-328–Lys-347. The 82-residue stretch at Asp-385 to Thr-466 folds into the UBX domain.

In terms of assembly, interacts with CDC48A via its UBX domain and with ubiquitin via its N-terminal UBA-like domain. In terms of tissue distribution, expressed broadly in sporophyte and gametophyte cells.

Its subcellular location is the nucleus. Functionally, acts as a bridge between CDC48A and ubiquitin, suggesting a role in targeted protein degradation. This is Plant UBX domain-containing protein 7 from Arabidopsis thaliana (Mouse-ear cress).